A 464-amino-acid polypeptide reads, in one-letter code: Isthmin-1 (464 aa).

An N-terminal signal peptide occupies residues 1–29 (MVRLAAELLLLLGLLLLTLHITVLRGSGA). Residue Asn-39 is glycosylated (N-linked (GlcNAc...) asparagine). Disordered stretches follow at residues 50–98 (NVGS…LQRD), 135–155 (PDSEADKDQHPENKPSWSVPS), and 173–219 (SGDQ…STDG). A compositionally biased stretch (polar residues) spans 51–63 (VGSDTTSETSFSL). Basic and acidic residues-rich tracts occupy residues 66–76 (EAPREHLDHQA) and 138–147 (EADKDQHPEN). The region spanning 218 to 262 (DGEGDWSLWSVCSVTCGNGNQKRTRSCGYACTATESRTCDRPNCP) is the TSP type-1 domain. Cystine bridges form between Cys-229-Cys-256, Cys-233-Cys-261, and Cys-244-Cys-248. One can recognise an AMOP domain in the interval 289 to 452 (LFEVDTDSCE…QKCTESPSDE (164 aa)).

The protein belongs to the isthmin family. As to quaternary structure, interacts with integrin ITGAV/ITGB5.

The protein resides in the secreted. Functionally, acts as an angiogenesis inhibitor. This Homo sapiens (Human) protein is Isthmin-1 (ISM1).